Here is a 244-residue protein sequence, read N- to C-terminus: Securin-like protein (244 aa).

The interval 31–53 is disordered; sequence ELEKTPSRGGLGLVVNSSKTPGG.

Forms a complex (via C-terminus) with separase sep-1. Interaction with ify-1 stabilizes sep-1. Also maintains the complex in the cytoplasm during interphase and recruits it to chromosomes during the first meiotic division. Interacts with E3 ubiquitin-protein ligase etc-1. Ubiquitinated by etc-1 likely at the onset of anaphase, resulting in its degradation. As to expression, expressed in germ cells including oocytes.

Its subcellular location is the cytoplasm. It localises to the chromosome. The protein resides in the cytoskeleton. The protein localises to the spindle. Functionally, acts as a chaperone and as an inhibitor for separase sep-1. Plays an essential role in maintaining chromosome cohesion prior to meiotic and mitotic anaphase, in cytokinesis and in organizing the spindle and the centrosome. Ubiquitination-dependent degradation at the onset of anaphase is likely to activate sep-1 resulting in the proteolysis of the cohesin complex and the subsequent segregation of the chromosomes. Also required for cortical granule exocytosis. The chain is Securin-like protein from Caenorhabditis elegans.